Consider the following 234-residue polypeptide: Probable pectate lyase F (234 aa).

A signal peptide spans 1–17 (MRSTAAVLSILLPGALA). N-linked (GlcNAc...) asparagine glycosylation occurs at asparagine 168.

It belongs to the polysaccharide lyase 3 family. The cofactor is Ca(2+).

It is found in the secreted. It catalyses the reaction Eliminative cleavage of (1-&gt;4)-alpha-D-galacturonan to give oligosaccharides with 4-deoxy-alpha-D-galact-4-enuronosyl groups at their non-reducing ends.. Pectinolytic enzyme consist of four classes of enzymes: pectin lyase, polygalacturonase, pectin methylesterase and rhamnogalacturonase. Among pectinolytic enzymes, pectin lyase is the most important in depolymerization of pectin, since it cleaves internal glycosidic bonds of highly methylated pectins. Favors pectate, the anion, over pectin, the methyl ester. The protein is Probable pectate lyase F (plyF) of Aspergillus terreus (strain NIH 2624 / FGSC A1156).